A 163-amino-acid polypeptide reads, in one-letter code: Cuticle protein 38 (163 aa).

14 tandem repeats follow at residues Ala7–Val10, Ala13–Ala16, Ala20–Ala23, Ala26–Val29, Ala56–Ala59, Ala62–Ala65, Ala68–Ala71, Ala75–Ala78, Ala81–Ala84, Ala93–Val96, Ala123–Ala126, Ala135–Ala138, Ala141–Ala144, and Ala156–Val159.

In terms of biological role, component of the cuticle of migratory locust which contains more than 100 different structural proteins. The chain is Cuticle protein 38 from Locusta migratoria (Migratory locust).